A 350-amino-acid polypeptide reads, in one-letter code: tRNA uridine(34) hydroxylase (350 aa).

Residues 146–240 (DDPEAVFVDM…YARRAREQGL (95 aa)) enclose the Rhodanese domain. Catalysis depends on cysteine 200, which acts as the Cysteine persulfide intermediate.

This sequence belongs to the TrhO family.

The catalysed reaction is uridine(34) in tRNA + AH2 + O2 = 5-hydroxyuridine(34) in tRNA + A + H2O. Its function is as follows. Catalyzes oxygen-dependent 5-hydroxyuridine (ho5U) modification at position 34 in tRNAs. The sequence is that of tRNA uridine(34) hydroxylase from Erwinia tasmaniensis (strain DSM 17950 / CFBP 7177 / CIP 109463 / NCPPB 4357 / Et1/99).